We begin with the raw amino-acid sequence, 257 residues long: NAD-capped RNA hydrolase NudC (257 aa).

The substrate site is built by lysine 25 and arginine 69. 2 residues coordinate Zn(2+): cysteine 98 and cysteine 101. Position 111 (glutamate 111) interacts with substrate. Residues cysteine 116 and cysteine 119 each coordinate Zn(2+). Residue tyrosine 124 participates in substrate binding. The region spanning 125–248 (PQIAPCIIVA…TVARRLIEDT (124 aa)) is the Nudix hydrolase domain. Residues alanine 158, glutamate 174, and glutamate 178 each contribute to the a divalent metal cation site. A Nudix box motif is present at residues 159–180 (GFVEVGETLEQAVAREVMEESG). 192 to 199 (QPWPFPQS) is a substrate binding site. A divalent metal cation is bound at residue glutamate 219. Residue alanine 241 participates in substrate binding.

The protein belongs to the Nudix hydrolase family. NudC subfamily. As to quaternary structure, homodimer. Mg(2+) serves as cofactor. Mn(2+) is required as a cofactor. The cofactor is Zn(2+).

The catalysed reaction is a 5'-end NAD(+)-phospho-ribonucleoside in mRNA + H2O = a 5'-end phospho-adenosine-phospho-ribonucleoside in mRNA + beta-nicotinamide D-ribonucleotide + 2 H(+). It catalyses the reaction NAD(+) + H2O = beta-nicotinamide D-ribonucleotide + AMP + 2 H(+). The enzyme catalyses NADH + H2O = reduced beta-nicotinamide D-ribonucleotide + AMP + 2 H(+). Functionally, mRNA decapping enzyme that specifically removes the nicotinamide adenine dinucleotide (NAD) cap from a subset of mRNAs by hydrolyzing the diphosphate linkage to produce nicotinamide mononucleotide (NMN) and 5' monophosphate mRNA. The NAD-cap is present at the 5'-end of some mRNAs and stabilizes RNA against 5'-processing. Has preference for mRNAs with a 5'-end purine. Catalyzes the hydrolysis of a broad range of dinucleotide pyrophosphates. In Escherichia coli O45:K1 (strain S88 / ExPEC), this protein is NAD-capped RNA hydrolase NudC.